The primary structure comprises 395 residues: Dihydroorotate dehydrogenase (quinone), mitochondrial (395 aa).

A mitochondrion; not cleaved-targeting transit peptide spans 1–10 (MAWRQLRKRA). The Mitochondrial matrix segment spans residues 1–10 (MAWRQLRKRA). The chain crosses the membrane as a helical span at residues 11-30 (LDAAIILGGGGLLFTSYLTA). Topologically, residues 31-395 (TGDDHFYAEY…TDAIGVDHRR (365 aa)) are mitochondrial intermembrane. Residues 95–99 (AGFDK) and Ser-119 each bind FMN. Residue Lys-99 participates in substrate binding. Residue 144-148 (NRYGF) participates in substrate binding. FMN-binding residues include Asn-180 and Asn-211. A substrate-binding site is contributed by 211–216 (NVSSPN). Catalysis depends on Ser-214, which acts as the Nucleophile. FMN contacts are provided by Lys-254 and Thr-282. 283-284 (NT) provides a ligand contact to substrate. Residues Gly-305, Gly-334, and 355–356 (YT) each bind FMN.

It belongs to the dihydroorotate dehydrogenase family. Type 2 subfamily. In terms of assembly, monomer. FMN serves as cofactor. Post-translationally, the uncleaved transit peptide is required for mitochondrial targeting and proper membrane integration.

The protein resides in the mitochondrion inner membrane. The catalysed reaction is (S)-dihydroorotate + a quinone = orotate + a quinol. The protein operates within pyrimidine metabolism; UMP biosynthesis via de novo pathway; orotate from (S)-dihydroorotate (quinone route): step 1/1. In terms of biological role, catalyzes the conversion of dihydroorotate to orotate with quinone as electron acceptor. Required for UMP biosynthesis via de novo pathway. This Mus musculus (Mouse) protein is Dihydroorotate dehydrogenase (quinone), mitochondrial (Dhodh).